Consider the following 341-residue polypeptide: MKALSKLKAEEGIWMIDVPEPELGHNDVMIKIRKTAICGTDVHIYNWDDWSQKTIPVPMVVGHEYVGEVVAIGQEVKGFKIGDRVSGEGHITCGYCRNCRGGRTHLCRNTIGVGVNRAGCFAQYLVIPAFNAFKIPDNISDELAAIFDPFGNAVHTALSFDLVGEDVLVSGAGPIGIMAAAVCKHVGARHVVITDVNEYRLELARKMGVTRAVNVSQENLTDVMAELGMTEGFDVGLEMSGAPAAFRTLLNTMNHGGRVALLGIPPSDMAIDWNQVIFKGLFIKGIYGREMFETWYKMATLIQSGLDLTPIITHRFSIDDFQKGFDIMRSGQSGKVILNWD.

Cysteine 38 serves as a coordination point for Zn(2+). Catalysis depends on charge relay system residues threonine 40 and histidine 43. 6 residues coordinate Zn(2+): histidine 63, glutamate 64, cysteine 93, cysteine 96, cysteine 99, and cysteine 107. NAD(+) is bound by residues isoleucine 175, aspartate 195, arginine 200, 262–264 (LGI), and 286–287 (IY).

The protein belongs to the zinc-containing alcohol dehydrogenase family. As to quaternary structure, homotetramer. It depends on Zn(2+) as a cofactor.

Its subcellular location is the cytoplasm. It catalyses the reaction L-threonine + NAD(+) = (2S)-2-amino-3-oxobutanoate + NADH + H(+). It functions in the pathway amino-acid degradation; L-threonine degradation via oxydo-reductase pathway; glycine from L-threonine: step 1/2. In terms of biological role, catalyzes the NAD(+)-dependent oxidation of L-threonine to 2-amino-3-ketobutyrate. The protein is L-threonine 3-dehydrogenase of Photorhabdus laumondii subsp. laumondii (strain DSM 15139 / CIP 105565 / TT01) (Photorhabdus luminescens subsp. laumondii).